A 349-amino-acid chain; its full sequence is DNA-directed RNA polymerase subunit alpha (349 aa).

The segment at 1-226 is alpha N-terminal domain (alpha-NTD); the sequence is MLIAQRPTLI…GLFGLAQELN (226 aa). The interval 241-349 is alpha C-terminal domain (alpha-CTD); it reads AALAADLALP…GAEFIETEQY (109 aa). Residues 309–349 are disordered; that stretch reads KDSPPGFDPRQAVDTYGTDAYSPSFSDPSDDGAEFIETEQY. A compositionally biased stretch (acidic residues) spans 336-349; the sequence is PSDDGAEFIETEQY.

It belongs to the RNA polymerase alpha chain family. Homodimer. The RNAP catalytic core consists of 2 alpha, 1 beta, 1 beta' and 1 omega subunit. When a sigma factor is associated with the core the holoenzyme is formed, which can initiate transcription.

It carries out the reaction RNA(n) + a ribonucleoside 5'-triphosphate = RNA(n+1) + diphosphate. In terms of biological role, DNA-dependent RNA polymerase catalyzes the transcription of DNA into RNA using the four ribonucleoside triphosphates as substrates. This Frankia casuarinae (strain DSM 45818 / CECT 9043 / HFP020203 / CcI3) protein is DNA-directed RNA polymerase subunit alpha.